We begin with the raw amino-acid sequence, 984 residues long: Probable beta-galactosidase C (984 aa).

The signal sequence occupies residues 1-19 (MRLLNIFTTLCLLLWSGAA). The substrate site is built by Tyr-78, Asn-123, Ala-124, Glu-125, and Asn-183. Glu-184 functions as the Proton donor in the catalytic mechanism. Tyr-247 provides a ligand contact to substrate. A disulfide bridge links Cys-253 with Cys-300. N-linked (GlcNAc...) asparagine glycosylation occurs at Asn-272. Glu-283 serves as the catalytic Nucleophile. Tyr-349 serves as a coordination point for substrate. Residues Asn-387, Asn-433, Asn-462, Asn-516, Asn-583, Asn-599, Asn-673, Asn-716, Asn-756, Asn-860, and Asn-870 are each glycosylated (N-linked (GlcNAc...) asparagine).

Belongs to the glycosyl hydrolase 35 family.

The protein resides in the secreted. The catalysed reaction is Hydrolysis of terminal non-reducing beta-D-galactose residues in beta-D-galactosides.. Cleaves beta-linked terminal galactosyl residues from gangliosides, glycoproteins, and glycosaminoglycans. This Sclerotinia sclerotiorum (strain ATCC 18683 / 1980 / Ss-1) (White mold) protein is Probable beta-galactosidase C (lacC).